Consider the following 227-residue polypeptide: Probable methylthioribulose-1-phosphate dehydratase (227 aa).

Substrate is bound at residue cysteine 87. Residues histidine 105 and histidine 107 each contribute to the Zn(2+) site. Catalysis depends on glutamate 129, which acts as the Proton donor/acceptor. Position 185 (histidine 185) interacts with Zn(2+).

This sequence belongs to the aldolase class II family. MtnB subfamily. It depends on Zn(2+) as a cofactor.

It localises to the cytoplasm. The enzyme catalyses 5-(methylsulfanyl)-D-ribulose 1-phosphate = 5-methylsulfanyl-2,3-dioxopentyl phosphate + H2O. The protein operates within amino-acid biosynthesis; L-methionine biosynthesis via salvage pathway; L-methionine from S-methyl-5-thio-alpha-D-ribose 1-phosphate: step 2/6. Catalyzes the dehydration of methylthioribulose-1-phosphate (MTRu-1-P) into 2,3-diketo-5-methylthiopentyl-1-phosphate (DK-MTP-1-P). The protein is Probable methylthioribulose-1-phosphate dehydratase of Drosophila ananassae (Fruit fly).